We begin with the raw amino-acid sequence, 335 residues long: Probable nicotianamine synthase 3 (335 aa).

It belongs to the nicotianamine synthase (NAS)-like family.

It carries out the reaction 3 S-adenosyl-L-methionine = nicotianamine + 3 S-methyl-5'-thioadenosine + 3 H(+). In terms of biological role, synthesizes nicotianamine, a polyamine that is the first intermediate in the synthesis of the phytosiderophores of the mugineic acid type found in gramineae which serves as a sensor for the physiological iron status within the plant, and/or might be involved in the transport of iron. In Hordeum vulgare (Barley), this protein is Probable nicotianamine synthase 3 (NAS3).